Consider the following 338-residue polypeptide: Mitochondrial glutathione transporter SLC25A40 (338 aa).

Solcar repeat units lie at residues 13 to 131 (VTPL…LSAL), 139 to 223 (NETC…LKKW), and 233 to 327 (PTFM…GKAF). Helical transmembrane passes span 19-39 (MLAS…LDVV), 103-123 (LWSG…IYFT), 142-162 (CIPI…ISPL), 199-220 (WAPT…YEIL), 239-259 (FTSG…FDVV), and 298-318 (GLFS…AIMI).

Belongs to the mitochondrial carrier (TC 2.A.29) family.

It localises to the mitochondrion inner membrane. It carries out the reaction glutathione(in) = glutathione(out). Functionally, probable mitochondrial transporter required for glutathione import into mitochondria. Glutathione, which plays key roles in oxidative metabolism, is produced exclusively in the cytosol and is imported in many organelles. Mitochondrial glutathione is required for the activity and stability of proteins containing iron-sulfur clusters, as well as erythropoiesis. The chain is Mitochondrial glutathione transporter SLC25A40 from Homo sapiens (Human).